The following is a 66-amino-acid chain: Protein translocase subunit SecE (66 aa).

The chain crosses the membrane as a helical span at residues L29–V49.

This sequence belongs to the SecE/SEC61-gamma family. Component of the Sec protein translocase complex. Heterotrimer consisting of SecY, SecE and SecG subunits. The heterotrimers can form oligomers, although 1 heterotrimer is thought to be able to translocate proteins. Interacts with the ribosome. Interacts with SecDF, and other proteins may be involved. Interacts with SecA.

It is found in the cell inner membrane. Essential subunit of the Sec protein translocation channel SecYEG. Clamps together the 2 halves of SecY. May contact the channel plug during translocation. This Rickettsia rickettsii protein is Protein translocase subunit SecE.